Reading from the N-terminus, the 340-residue chain is CMP-N-acetylneuraminate-beta-galactosamide-alpha-2,3-sialyltransferase 1 (340 aa).

Topologically, residues 1 to 13 (MVTLRKRTLKVLT) are cytoplasmic. A helical; Signal-anchor for type II membrane protein membrane pass occupies residues 14-34 (FLVLFIFLTSFFLNYSHTMVA). The Lumenal portion of the chain corresponds to 35-340 (TTWFPKQMVL…INKIRIFKGR (306 aa)). 3 disulfide bridges follow: Cys-59–Cys-64, Cys-61–Cys-139, and Cys-142–Cys-281. A glycan (N-linked (GlcNAc...) asparagine) is linked at Asn-79. Gln-105 contacts substrate. N-linked (GlcNAc...) asparagine glycosylation occurs at Asn-114. Asn-147 and Asn-170 together coordinate substrate. N-linked (GlcNAc...) asparagine glycosylation occurs at Asn-201. Substrate contacts are provided by Tyr-230, Tyr-266, Gly-270, Gly-290, His-299, and His-316. Asn-323 is a glycosylation site (N-linked (GlcNAc...) asparagine).

This sequence belongs to the glycosyltransferase 29 family. The soluble form derives from the membrane form by proteolytic processing. As to expression, expressed in several tissues. Highest expression in lung, liver, skeletal muscle, kidney, pancreas, spleen and placenta.

Its subcellular location is the golgi apparatus. The protein resides in the golgi stack membrane. It is found in the trans-Golgi network membrane. The protein localises to the secreted. The enzyme catalyses a beta-D-galactosyl-(1-&gt;3)-N-acetyl-alpha-D-galactosaminyl derivative + CMP-N-acetyl-beta-neuraminate = an N-acetyl-alpha-neuraminyl-(2-&gt;3)-beta-D-galactosyl-(1-&gt;3)-N-acetyl-alpha-D-galactosaminyl derivative + CMP + H(+). The catalysed reaction is a ganglioside GM1 + CMP-N-acetyl-beta-neuraminate = a ganglioside GD1a + CMP + H(+). It catalyses the reaction a ganglioside GM1 (d18:1(4E)) + CMP-N-acetyl-beta-neuraminate = a ganglioside GD1a (d18:1(4E)) + CMP + H(+). It carries out the reaction ganglioside GM1 (d18:1(4E)/18:0) + CMP-N-acetyl-beta-neuraminate = ganglioside GD1a (18:1(4E)/18:0) + CMP + H(+). The enzyme catalyses a ganglioside GA1 + CMP-N-acetyl-beta-neuraminate = a ganglioside GM1b + CMP + H(+). The catalysed reaction is a ganglioside GA1 (d18:1(4E)) + CMP-N-acetyl-beta-neuraminate = a ganglioside GM1b (d18:1(4E)) + CMP + H(+). It catalyses the reaction a ganglioside GD1b + CMP-N-acetyl-beta-neuraminate = a ganglioside GT1b + CMP + H(+). It carries out the reaction a 3-O-[beta-D-galactosyl-(1-&gt;3)-N-acetyl-alpha-D-galactosaminyl]-L-threonyl-[protein] + CMP-N-acetyl-beta-neuraminate = a 3-O-[N-acetyl-alpha-neuraminyl-(2-&gt;3)-beta-D-galactosyl-(1-&gt;3)-N-acetyl-alpha-D-galactosaminyl]-L-threonyl-[protein] + CMP + H(+). The enzyme catalyses a 3-O-[beta-D-galactosyl-(1-&gt;3)-N-acetyl-alpha-D-galactosaminyl]-L-seryl-[protein] + CMP-N-acetyl-beta-neuraminate = 3-O-[N-acetyl-alpha-neuraminyl-(2-&gt;3)-beta-D-galactosyl-(1-&gt;3)-N-acetyl-alpha-D-galactosaminyl]-L-seryl-[protein] + CMP + H(+). The protein operates within protein modification; protein glycosylation. It participates in glycolipid biosynthesis. In terms of biological role, a beta-galactoside alpha2-&gt;3 sialyltransferase involved in terminal sialylation of glycoproteins and glycolipids. Catalyzes the transfer of sialic acid (N-acetyl-neuraminic acid; Neu5Ac) from the nucleotide sugar donor CMP-Neu5Ac onto acceptor Galbeta-(1-&gt;3)-GalNAc-terminated glycoconjugates through an alpha2-3 linkage. Adds sialic acid to the core 1 O-glycan, Galbeta-(1-&gt;3)-GalNAc-O-Ser/Thr, which is a major structure of mucin-type O-glycans. As part of a homeostatic mechanism that regulates CD8-positive T cell numbers, sialylates core 1 O-glycans of T cell glycoproteins, SPN/CD43 and PTPRC/CD45. Prevents premature apoptosis of thymic CD8-positive T cells prior to peripheral emigration, whereas in the secondary lymphoid organs controls the survival of CD8-positive memory T cells generated following a successful immune response. Transfers sialic acid to asialofetuin, presumably onto Galbeta-(1-&gt;3)-GalNAc-O-Ser. Sialylates GM1a, GA1 and GD1b gangliosides to form GD1a, GM1b and GT1b, respectively. The chain is CMP-N-acetylneuraminate-beta-galactosamide-alpha-2,3-sialyltransferase 1 from Homo sapiens (Human).